A 359-amino-acid chain; its full sequence is Histidinol-phosphate aminotransferase (359 aa).

Lys-217 bears the N6-(pyridoxal phosphate)lysine mark.

The protein belongs to the class-II pyridoxal-phosphate-dependent aminotransferase family. Histidinol-phosphate aminotransferase subfamily. Homodimer. The cofactor is pyridoxal 5'-phosphate.

The enzyme catalyses L-histidinol phosphate + 2-oxoglutarate = 3-(imidazol-4-yl)-2-oxopropyl phosphate + L-glutamate. The protein operates within amino-acid biosynthesis; L-histidine biosynthesis; L-histidine from 5-phospho-alpha-D-ribose 1-diphosphate: step 7/9. The protein is Histidinol-phosphate aminotransferase of Salmonella arizonae (strain ATCC BAA-731 / CDC346-86 / RSK2980).